A 2710-amino-acid polypeptide reads, in one-letter code: Serine/threonine-protein kinase ATR (2710 aa).

The FAT domain occupies 1647–2257 (TLAKASFRCQ…LWMMAAVSKS (611 aa)). Residues 2368–2680 (IADDAEILNS…GVNAAPSLPL (313 aa)) form the PI3K/PI4K catalytic domain. Residues 2374–2380 (ILNSLQK) form a G-loop region. The tract at residues 2545-2553 (GLGDRHGEN) is catalytic loop. The segment at 2565–2589 (HVDFSCLFDKGLLLEKPEVVPFRFT) is activation loop. Residues 2678–2710 (LPLSVEGQARRLIAEAVSHSNLGKMYVWWMAWF) form the FATC domain.

This sequence belongs to the PI3/PI4-kinase family. ATM subfamily.

The protein resides in the nucleus. It catalyses the reaction L-seryl-[protein] + ATP = O-phospho-L-seryl-[protein] + ADP + H(+). The catalysed reaction is L-threonyl-[protein] + ATP = O-phospho-L-threonyl-[protein] + ADP + H(+). Probable serine/threonine kinase. Seems to play a central role in cell-cycle regulation by transmitting DNA damage signals to downstream effectors of cell-cycle progression. May recognize the substrate consensus sequence [ST]-Q and phosphorylate histone variant H2AX to form H2AXS139ph at sites of DNA damage, thereby regulating DNA damage response mechanism. The protein is Serine/threonine-protein kinase ATR of Oryza sativa subsp. indica (Rice).